A 660-amino-acid polypeptide reads, in one-letter code: Bifunctional polymyxin resistance protein ArnA (660 aa).

The interval 1–304 (MKAVIFAYHD…TLGLVAGARL (304 aa)) is formyltransferase ArnAFT. The active-site Proton donor; for formyltransferase activity is the H104. Residues R114 and 136 to 140 (VKRAD) contribute to the (6R)-10-formyltetrahydrofolate site. Residues 314-660 (RRIRVLILGV…RSVDVAERAS (347 aa)) form a dehydrogenase ArnADH region. Residues D347 and 368 to 369 (DI) contribute to the NAD(+) site. UDP-alpha-D-glucuronate is bound by residues A393, Y398, and 432–433 (TS). E434 acts as the Proton acceptor; for decarboxylase activity in catalysis. UDP-alpha-D-glucuronate contacts are provided by residues R460, N492, 526–535 (KLIDGGQQKR), and Y613. Residue R619 is the Proton donor; for decarboxylase activity of the active site.

In the N-terminal section; belongs to the Fmt family. UDP-L-Ara4N formyltransferase subfamily. This sequence in the C-terminal section; belongs to the NAD(P)-dependent epimerase/dehydratase family. UDP-glucuronic acid decarboxylase subfamily. In terms of assembly, homohexamer, formed by a dimer of trimers.

The enzyme catalyses UDP-alpha-D-glucuronate + NAD(+) = UDP-beta-L-threo-pentopyranos-4-ulose + CO2 + NADH. It catalyses the reaction UDP-4-amino-4-deoxy-beta-L-arabinose + (6R)-10-formyltetrahydrofolate = UDP-4-deoxy-4-formamido-beta-L-arabinose + (6S)-5,6,7,8-tetrahydrofolate + H(+). It functions in the pathway nucleotide-sugar biosynthesis; UDP-4-deoxy-4-formamido-beta-L-arabinose biosynthesis; UDP-4-deoxy-4-formamido-beta-L-arabinose from UDP-alpha-D-glucuronate: step 1/3. Its pathway is nucleotide-sugar biosynthesis; UDP-4-deoxy-4-formamido-beta-L-arabinose biosynthesis; UDP-4-deoxy-4-formamido-beta-L-arabinose from UDP-alpha-D-glucuronate: step 3/3. It participates in bacterial outer membrane biogenesis; lipopolysaccharide biosynthesis. In terms of biological role, bifunctional enzyme that catalyzes the oxidative decarboxylation of UDP-glucuronic acid (UDP-GlcUA) to UDP-4-keto-arabinose (UDP-Ara4O) and the addition of a formyl group to UDP-4-amino-4-deoxy-L-arabinose (UDP-L-Ara4N) to form UDP-L-4-formamido-arabinose (UDP-L-Ara4FN). The modified arabinose is attached to lipid A and is required for resistance to polymyxin and cationic antimicrobial peptides. This Salmonella paratyphi C (strain RKS4594) protein is Bifunctional polymyxin resistance protein ArnA.